Reading from the N-terminus, the 336-residue chain is 3-isopropylmalate dehydrogenase (336 aa).

Arg87, Arg97, Arg121, and Asp211 together coordinate substrate. Residues Asp211, Asp235, and Asp239 each contribute to the Mg(2+) site. An NAD(+)-binding site is contributed by 271-283 (GSAPDIAGQGIAD).

Belongs to the isocitrate and isopropylmalate dehydrogenases family. LeuB type 2 subfamily. As to quaternary structure, homodimer. Requires Mg(2+) as cofactor. Mn(2+) serves as cofactor.

It localises to the cytoplasm. The catalysed reaction is (2R,3S)-3-isopropylmalate + NAD(+) = 4-methyl-2-oxopentanoate + CO2 + NADH. Its pathway is amino-acid biosynthesis; L-leucine biosynthesis; L-leucine from 3-methyl-2-oxobutanoate: step 3/4. Catalyzes the oxidation of 3-carboxy-2-hydroxy-4-methylpentanoate (3-isopropylmalate) to 3-carboxy-4-methyl-2-oxopentanoate. The product decarboxylates to 4-methyl-2 oxopentanoate. In Mycolicibacterium paratuberculosis (strain ATCC BAA-968 / K-10) (Mycobacterium paratuberculosis), this protein is 3-isopropylmalate dehydrogenase.